The primary structure comprises 211 residues: Dephospho-CoA kinase (211 aa).

The DPCK domain maps to 3-206 (VLGLTGGIGS…PGMKGPDPHA (204 aa)). Residue 11–16 (GSGKSI) participates in ATP binding.

Belongs to the CoaE family.

The protein resides in the cytoplasm. It carries out the reaction 3'-dephospho-CoA + ATP = ADP + CoA + H(+). It functions in the pathway cofactor biosynthesis; coenzyme A biosynthesis; CoA from (R)-pantothenate: step 5/5. Its function is as follows. Catalyzes the phosphorylation of the 3'-hydroxyl group of dephosphocoenzyme A to form coenzyme A. The polypeptide is Dephospho-CoA kinase (Syntrophotalea carbinolica (strain DSM 2380 / NBRC 103641 / GraBd1) (Pelobacter carbinolicus)).